A 37-amino-acid chain; its full sequence is Photosystem II reaction center protein T (37 aa).

Residues 3–23 (ALVYTFLLVSTLGIIFFAIFF) traverse the membrane as a helical segment.

The protein belongs to the PsbT family. In terms of assembly, PSII is composed of 1 copy each of membrane proteins PsbA, PsbB, PsbC, PsbD, PsbE, PsbF, PsbH, PsbI, PsbJ, PsbK, PsbL, PsbM, PsbT, PsbY, PsbZ, Psb30/Ycf12, at least 3 peripheral proteins of the oxygen-evolving complex and a large number of cofactors. It forms dimeric complexes.

It is found in the plastid. It localises to the chloroplast thylakoid membrane. Found at the monomer-monomer interface of the photosystem II (PS II) dimer, plays a role in assembly and dimerization of PSII. PSII is a light-driven water plastoquinone oxidoreductase, using light energy to abstract electrons from H(2)O, generating a proton gradient subsequently used for ATP formation. This chain is Photosystem II reaction center protein T, found in Cucumis sativus (Cucumber).